A 216-amino-acid chain; its full sequence is Pyridoxine/pyridoxamine 5'-phosphate oxidase (216 aa).

Substrate-binding positions include Arg-12–Tyr-15 and Lys-70. FMN-binding positions include Arg-65–Lys-70, Phe-80–Thr-81, Arg-86, and Lys-87. The substrate site is built by Tyr-127, Arg-131, and Ser-135. FMN-binding positions include Gln-144 to Ser-145 and Trp-188. Substrate is bound at residue Arg-194–His-196. Residue Arg-198 participates in FMN binding.

It belongs to the pyridoxamine 5'-phosphate oxidase family. As to quaternary structure, homodimer. FMN is required as a cofactor.

It carries out the reaction pyridoxamine 5'-phosphate + O2 + H2O = pyridoxal 5'-phosphate + H2O2 + NH4(+). It catalyses the reaction pyridoxine 5'-phosphate + O2 = pyridoxal 5'-phosphate + H2O2. The protein operates within cofactor metabolism; pyridoxal 5'-phosphate salvage; pyridoxal 5'-phosphate from pyridoxamine 5'-phosphate: step 1/1. It participates in cofactor metabolism; pyridoxal 5'-phosphate salvage; pyridoxal 5'-phosphate from pyridoxine 5'-phosphate: step 1/1. Catalyzes the oxidation of either pyridoxine 5'-phosphate (PNP) or pyridoxamine 5'-phosphate (PMP) into pyridoxal 5'-phosphate (PLP). In Polaromonas sp. (strain JS666 / ATCC BAA-500), this protein is Pyridoxine/pyridoxamine 5'-phosphate oxidase.